The primary structure comprises 283 residues: Orotidine 5'-phosphate decarboxylase (283 aa).

Lysine 97 acts as the Proton donor in catalysis.

It belongs to the OMP decarboxylase family. Type 2 subfamily.

The catalysed reaction is orotidine 5'-phosphate + H(+) = UMP + CO2. The protein operates within pyrimidine metabolism; UMP biosynthesis via de novo pathway; UMP from orotate: step 2/2. The protein is Orotidine 5'-phosphate decarboxylase of Clostridium botulinum (strain Okra / Type B1).